We begin with the raw amino-acid sequence, 31 residues long: YGGFMTSEKSQTPLVTLFKNAIIKNAHKKGQ.

The protein belongs to the POMC family.

The protein resides in the secreted. Functionally, beta-endorphin and Met-enkephalin are endogenous opiates. The protein is Beta-endorphin (POMC) of Camelus dromedarius (Dromedary).